A 926-amino-acid chain; its full sequence is Protein Niban 1 (926 aa).

Residue glycine 2 is the site of N-myristoyl glycine attachment. Serine 578, serine 581, serine 595, serine 601, and serine 640 each carry phosphoserine. Disordered stretches follow at residues 604-699 (LPGA…VPGS) and 719-889 (VEND…EQVN). Polar residues predominate over residues 661-672 (VENTAGPLSSHL). Phosphoserine is present on serine 699. Residues 733-745 (NIKEEESKIHPEA) show a composition bias toward basic and acidic residues. Serine 755 carries the phosphoserine modification. Basic and acidic residues predominate over residues 756 to 767 (CEEREVREKEAQ). Residues 784–797 (GRGSTSQSTSGGLT) are compositionally biased toward low complexity. Polar residues predominate over residues 840–854 (VTVTPQEDATLSSNP). A Phosphoserine modification is found at serine 923.

Belongs to the Niban family.

It localises to the cytoplasm. It is found in the membrane. Regulates phosphorylation of a number of proteins involved in translation regulation including EIF2A, EIF4EBP1 and RPS6KB1. May be involved in the endoplasmic reticulum stress response. The chain is Protein Niban 1 from Mus musculus (Mouse).